Consider the following 128-residue polypeptide: Transcription antitermination protein NusB (128 aa).

It belongs to the NusB family.

Functionally, involved in transcription antitermination. Required for transcription of ribosomal RNA (rRNA) genes. Binds specifically to the boxA antiterminator sequence of the ribosomal RNA (rrn) operons. This Listeria innocua serovar 6a (strain ATCC BAA-680 / CLIP 11262) protein is Transcription antitermination protein NusB.